Here is a 170-residue protein sequence, read N- to C-terminus: Adenine phosphoribosyltransferase (170 aa).

This sequence belongs to the purine/pyrimidine phosphoribosyltransferase family. In terms of assembly, homodimer.

It is found in the cytoplasm. The catalysed reaction is AMP + diphosphate = 5-phospho-alpha-D-ribose 1-diphosphate + adenine. It functions in the pathway purine metabolism; AMP biosynthesis via salvage pathway; AMP from adenine: step 1/1. Catalyzes a salvage reaction resulting in the formation of AMP, that is energically less costly than de novo synthesis. This is Adenine phosphoribosyltransferase from Bacillus mycoides (strain KBAB4) (Bacillus weihenstephanensis).